The sequence spans 579 residues: Probable receptor-like serine/threonine-protein kinase At5g57670 (579 aa).

T256 carries the phosphothreonine modification. Positions 267-542 (FHQGNIVGIG…LLTNGNEAEI (276 aa)) constitute a Protein kinase domain. ATP is bound by residues 273 to 281 (VGIGGYSEV) and K295. The active-site Proton acceptor is D392. S396 bears the Phosphoserine mark. T432 bears the Phosphothreonine mark.

It belongs to the protein kinase superfamily. Ser/Thr protein kinase family.

It carries out the reaction L-seryl-[protein] + ATP = O-phospho-L-seryl-[protein] + ADP + H(+). The catalysed reaction is L-threonyl-[protein] + ATP = O-phospho-L-threonyl-[protein] + ADP + H(+). This Arabidopsis thaliana (Mouse-ear cress) protein is Probable receptor-like serine/threonine-protein kinase At5g57670.